Here is a 134-residue protein sequence, read N- to C-terminus: Nogalonic acid methyl ester cyclase (134 aa).

Q95 provides a ligand contact to nogalaviketone. The active-site Proton donor/acceptor is D111.

The protein belongs to the polyketide cyclase DnrD family. Homotetramer. Dimer of dimers.

The catalysed reaction is nogalaviketone = methyl nogalonate. It functions in the pathway antibiotic biosynthesis. Functionally, involved in the biosynthesis of the aromatic polyketide antibiotic nogalamycin. Catalyzes the formation of nogalaviketone from nogalonic acid methyl ester (NAME), the last ring-closure step in the biosynthesis of nogalamycin. This is Nogalonic acid methyl ester cyclase from Streptomyces nogalater.